The primary structure comprises 427 residues: Trigger factor (427 aa).

The PPIase FKBP-type domain occupies 163–248 (GDTVILDFEG…LHEIKTKEVP (86 aa)).

It belongs to the FKBP-type PPIase family. Tig subfamily.

It is found in the cytoplasm. The catalysed reaction is [protein]-peptidylproline (omega=180) = [protein]-peptidylproline (omega=0). Involved in protein export. Acts as a chaperone by maintaining the newly synthesized protein in an open conformation. Functions as a peptidyl-prolyl cis-trans isomerase. This chain is Trigger factor, found in Listeria welshimeri serovar 6b (strain ATCC 35897 / DSM 20650 / CCUG 15529 / CIP 8149 / NCTC 11857 / SLCC 5334 / V8).